The primary structure comprises 525 residues: Lymphocyte activation gene 3 protein (525 aa).

Residues 1-23 (MRQDLFLDLLLLQLLWEAPVVSS) form the signal peptide. Topologically, residues 24-442 (GPGKELSVVW…ISGDLKGGHL (419 aa)) are extracellular. Positions 37–163 (GAPVHLPCSL…FSCSLRLRVG (127 aa)) constitute an Ig-like V-type domain. Residues 37–246 (GAPVHLPCSL…LTYRDGFNVS (210 aa)) are interaction with FGL1. C44 and C156 are oxidised to a cystine. 3 consecutive Ig-like C2-type domains span residues 164 to 246 (QASM…FNVS), 258 to 341 (PVAP…AAVT), and 345 to 412 (ITVT…EGQK). N-linked (GlcNAc...) asparagine glycosylation occurs at N184. C185 and C235 are disulfide-bonded. N244 and N309 each carry an N-linked (GlcNAc...) asparagine glycan. Cystine bridges form between C276–C327 and C363–C405. Residues 422 to 442 (ESSSGAWSAKRISGDLKGGHL) are connecting peptide. A helical transmembrane segment spans residues 443-463 (FLSLILGALALFLLVTGAFGF). Residues 464–525 (HLWRRQLLRR…PELEPESRQL (62 aa)) are Cytoplasmic-facing. The segment at 486–525 (PVQSKIEELEREPETEMEPETEPDPEPQPEPELEPESRQL) is disordered. The KIEELE motif motif lies at 490 to 495 (KIEELE). The segment covering 490–499 (KIEELEREPE) has biased composition (basic and acidic residues). The segment at 493-522 (ELEREPETEMEPETEPDPEPQPEPELEPES) is 15 X 2 AA tandem repeats of E-X. Residues 500-519 (TEMEPETEPDPEPQPEPELE) show a composition bias toward acidic residues.

It belongs to the LAG3 family. Interacts with MHC class II (MHC-II); selectively recognizes stable complexes of peptide and MHC-II. Interacts with FGL1 (via the Fibrinogen C-terminal domain). In terms of processing, proteolytically cleaved by ADAM10 and ADAM17 within the connecting peptide region, leading to release of Secreted lymphocyte activation gene 3 protein (sLAG-3). ADAM10 mediates constitutive cleavage, but cleavage increases following T-cell activation, whereas shedding by ADAM17 is induced by TCR signaling in a PRKCQ-dependent manner.

Its subcellular location is the cell membrane. The protein resides in the secreted. In terms of biological role, lymphocyte activation gene 3 protein: Inhibitory receptor on antigen activated T-cells. Delivers inhibitory signals upon binding to ligands, such as FGL1. FGL1 constitutes a major ligand of LAG3 and is responsible for LAG3 T-cell inhibitory function. Following TCR engagement, LAG3 associates with CD3-TCR in the immunological synapse and directly inhibits T-cell activation. May inhibit antigen-specific T-cell activation in synergy with PDCD1/PD-1, possibly by acting as a coreceptor for PDCD1/PD-1. Negatively regulates the proliferation, activation, effector function and homeostasis of both CD8(+) and CD4(+) T-cells. Also mediates immune tolerance: constitutively expressed on a subset of regulatory T-cells (Tregs) and contributes to their suppressive function. Also acts as a negative regulator of plasmacytoid dendritic cell (pDCs) activation. Binds MHC class II (MHC-II); the precise role of MHC-II-binding is however unclear. Functionally, may function as a ligand for MHC class II (MHC-II) on antigen-presenting cells (APC), promoting APC activation/maturation and driving Th1 immune response. The protein is Lymphocyte activation gene 3 protein (Lag3) of Rattus norvegicus (Rat).